A 509-amino-acid polypeptide reads, in one-letter code: Histidine ammonia-lyase (509 aa).

The 5-imidazolinone (Ala-Gly) cross-link spans 142–144 (ASG). At Ser143 the chain carries 2,3-didehydroalanine (Ser).

The protein belongs to the PAL/histidase family. Contains an active site 4-methylidene-imidazol-5-one (MIO), which is formed autocatalytically by cyclization and dehydration of residues Ala-Ser-Gly.

It localises to the cytoplasm. The enzyme catalyses L-histidine = trans-urocanate + NH4(+). The protein operates within amino-acid degradation; L-histidine degradation into L-glutamate; N-formimidoyl-L-glutamate from L-histidine: step 1/3. This chain is Histidine ammonia-lyase, found in Pseudomonas aeruginosa (strain LESB58).